We begin with the raw amino-acid sequence, 385 residues long: Outer membrane protein P2 (385 aa).

The first 20 residues, 1–20 (MKKTLAALIVGAFAASAANA), serve as a signal peptide directing secretion.

This sequence belongs to the Gram-negative porin family. As to quaternary structure, homotrimer.

It localises to the cell outer membrane. Forms pores that allow passive diffusion of small molecules across the outer membrane. The polypeptide is Outer membrane protein P2 (ompP2) (Haemophilus influenzae).